Reading from the N-terminus, the 220-residue chain is Vesicle-associated membrane protein 7 (220 aa).

At 2 to 188 the chain is on the cytoplasmic side; it reads AILFAVVARG…ARAMCMKNLK (187 aa). One can recognise a Longin domain in the interval 7–110; it reads VVARGTTILA…AMNSEFSSVL (104 aa). Residues 125–185 form the v-SNARE coiled-coil homology domain; it reads QVAETQAQVD…RNLARAMCMK (61 aa). The chain crosses the membrane as a helical; Anchor for type IV membrane protein span at residues 189–209; the sequence is LTIIIIIVSIVIIYIIVSAAC. The Vesicular segment spans residues 210–220; sequence GGLAWPSCVQK.

Belongs to the synaptobrevin family.

Its subcellular location is the cytoplasmic vesicle. It is found in the secretory vesicle membrane. The protein resides in the golgi apparatus. It localises to the trans-Golgi network membrane. The protein localises to the late endosome membrane. Its subcellular location is the lysosome membrane. It is found in the endoplasmic reticulum membrane. The protein resides in the phagosome membrane. It localises to the synapse. The protein localises to the synaptosome. In terms of biological role, involved in the targeting and/or fusion of transport vesicles to their target membrane during transport of proteins from the early endosome to the lysosome. Required for heterotypic fusion of late endosomes with lysosomes and homotypic lysosomal fusion. Required for calcium regulated lysosomal exocytosis. Involved in the export of chylomicrons from the endoplasmic reticulum to the cis Golgi. Required for focal exocytosis of late endocytic vesicles during phagosome formation. This chain is Vesicle-associated membrane protein 7, found in Gallus gallus (Chicken).